The chain runs to 215 residues: MKNVDFCTFGVKLGMTQILDNFGNLVPVTIVSQPKPCVITRVTTSLNSQQKLIIQIGCYSDFRANKPTIGYFKKQSVPNLRYLHEFQTYKNNEYQVGKSLDLKELDQQLVQVSAYTIGKGFAGYQKKHKFSRGAMSHGSKSHRRPGSIGAGTTPGRVFPGVKMAGRLGFSRRSIKNLLVLKVDLTNKLFLLKGSVPGKYGNLLLVSLKKTNYFLD.

The interval 132-151 (RGAMSHGSKSHRRPGSIGAG) is disordered.

This sequence belongs to the universal ribosomal protein uL3 family. In terms of assembly, part of the 50S ribosomal subunit.

The protein localises to the plastid. It is found in the chloroplast. Its function is as follows. One of the primary rRNA binding proteins, it binds directly near the 3'-end of the 23S rRNA, where it nucleates assembly of the 50S subunit. In Cyanidium caldarium (Red alga), this protein is Large ribosomal subunit protein uL3c (rpl3).